A 634-amino-acid chain; its full sequence is Leucine--tRNA ligase subunit alpha (634 aa).

Residues P43 to H51 carry the 'HIGH' region motif.

It belongs to the class-I aminoacyl-tRNA synthetase family. In terms of assembly, seems to consist of an alpha chain and a beta chain.

Its subcellular location is the cytoplasm. The enzyme catalyses tRNA(Leu) + L-leucine + ATP = L-leucyl-tRNA(Leu) + AMP + diphosphate. This Aquifex aeolicus (strain VF5) protein is Leucine--tRNA ligase subunit alpha (leuS).